The sequence spans 215 residues: Jasmonate monooxygenase ABM (215 aa).

The region spanning 2-90 (FAVIFETRPQ…GVLEDYHLRV (89 aa)) is the ABM domain.

Its subcellular location is the endoplasmic reticulum. The protein resides in the secreted. It carries out the reaction jasmonate + NADPH + O2 + H(+) = (1R,2R)-12-hydroxyjasmonate + NADP(+) + H2O. Its function is as follows. Monooxygenase that converts the endogenous (and likely the host) jasmonate (JA) to its hydroxylated derivative 12-hydroxyjasmonate (12OH-JA), also known as tuberonic acid, a compound that attenuates or disables jasmonate-based host innate immunity and which is essential for proper initiation and elaboration of the blast disease in rice. ABM, together with a polyketide synthase MGG_04775 and the esterase MGG_04774, share the secondary metabolism gene cluster with ABC transporter ABC3, and therefore may also be involved in the synthesis of other important metabolites such as the ABC3 transporter efflux substrate (ATS) and/or additional polyketides. This is Jasmonate monooxygenase ABM from Pyricularia oryzae (strain 70-15 / ATCC MYA-4617 / FGSC 8958) (Rice blast fungus).